The following is a 104-amino-acid chain: V-type ATP synthase subunit F (104 aa).

It belongs to the V-ATPase F subunit family.

Produces ATP from ADP in the presence of a proton gradient across the membrane. In Thermus thermophilus (strain ATCC BAA-163 / DSM 7039 / HB27), this protein is V-type ATP synthase subunit F.